We begin with the raw amino-acid sequence, 177 residues long: Large ribosomal subunit protein uL5 (177 aa).

This sequence belongs to the universal ribosomal protein uL5 family. Part of the 50S ribosomal subunit; contacts the 5S rRNA and probably tRNA. Forms a bridge to the 30S subunit in the 70S ribosome.

Its function is as follows. This is one of the proteins that bind and probably mediate the attachment of the 5S RNA into the large ribosomal subunit, where it forms part of the central protuberance. In the 70S ribosome it contacts protein S13 of the 30S subunit (bridge B1b), connecting the 2 subunits; this bridge is implicated in subunit movement. May contact the P site tRNA; the 5S rRNA and some of its associated proteins might help stabilize positioning of ribosome-bound tRNAs. This is Large ribosomal subunit protein uL5 from Sulfurisphaera tokodaii (strain DSM 16993 / JCM 10545 / NBRC 100140 / 7) (Sulfolobus tokodaii).